We begin with the raw amino-acid sequence, 324 residues long: Bacilliredoxin reductase Bdr (324 aa).

The residue at position 220 (Cys220) is an S-bacillithiol cysteine disulfide.

Interacts with BrxC. The cofactor is FAD. In terms of processing, C-terminal Cys can react with bacillithiol (BSH) to form mixed disulfides. S-bacillithiolation protects Cys residues against overoxidation by acting as a redox switch in response to oxidative stress.

Its function is as follows. S-bacillithiolation is the formation of mixed disulfide bonds between protein thiols and the general thiol reductant bacillithiol (BSH) under oxidative stress. BSH is an equivalent of glutathione (GSH) in Firmicutes. This protein is a NADPH-dependent bacilliredoxin reductase, which debacillithiolates (removes BSH) the S-bacillithiolated BrxB (BrxB-SSB), and to a lesser extent BrxC (BrxC-SSB). Involved in a redox cascade increasing the efficacy of BrxB function by reducing BrxB-SSB and thus reactivating it. Has NADPH-dependent oxidase activity under aerobic conditions producing hydrogen peroxide (H(2)O(2)). In Bacillus subtilis (strain 168), this protein is Bacilliredoxin reductase Bdr.